A 165-amino-acid chain; its full sequence is Chorismate pyruvate-lyase (165 aa).

The substrate site is built by Met-35, Arg-77, Leu-115, and Glu-156.

This sequence belongs to the UbiC family. In terms of assembly, monomer.

The protein resides in the cytoplasm. It carries out the reaction chorismate = 4-hydroxybenzoate + pyruvate. The protein operates within cofactor biosynthesis; ubiquinone biosynthesis. Its function is as follows. Removes the pyruvyl group from chorismate, with concomitant aromatization of the ring, to provide 4-hydroxybenzoate (4HB) for the ubiquinone pathway. This chain is Chorismate pyruvate-lyase, found in Citrobacter koseri (strain ATCC BAA-895 / CDC 4225-83 / SGSC4696).